A 143-amino-acid chain; its full sequence is 3-dehydroquinate dehydratase (143 aa).

The Proton acceptor role is filled by Y22. Substrate-binding residues include N73, H79, and D86. H99 functions as the Proton donor in the catalytic mechanism. Residues 100–101 (IS) and R110 contribute to the substrate site.

The protein belongs to the type-II 3-dehydroquinase family. Homododecamer.

It catalyses the reaction 3-dehydroquinate = 3-dehydroshikimate + H2O. It functions in the pathway metabolic intermediate biosynthesis; chorismate biosynthesis; chorismate from D-erythrose 4-phosphate and phosphoenolpyruvate: step 3/7. Its function is as follows. Catalyzes a trans-dehydration via an enolate intermediate. The sequence is that of 3-dehydroquinate dehydratase from Mycobacterium avium (strain 104).